The sequence spans 97 residues: Large ribosomal subunit protein bL28 (97 aa).

The protein belongs to the bacterial ribosomal protein bL28 family.

The sequence is that of Large ribosomal subunit protein bL28 from Rickettsia peacockii (strain Rustic).